The following is a 232-amino-acid chain: 5'-methylthioadenosine/S-adenosylhomocysteine nucleosidase (232 aa).

Residue Glu-12 is the Proton acceptor of the active site. Residues Gly-78, Ile-152, and 173-174 (ME) each bind substrate. The Proton donor role is filled by Asp-197.

This sequence belongs to the PNP/UDP phosphorylase family. MtnN subfamily. As to quaternary structure, homodimer.

The enzyme catalyses S-adenosyl-L-homocysteine + H2O = S-(5-deoxy-D-ribos-5-yl)-L-homocysteine + adenine. It catalyses the reaction S-methyl-5'-thioadenosine + H2O = 5-(methylsulfanyl)-D-ribose + adenine. It carries out the reaction 5'-deoxyadenosine + H2O = 5-deoxy-D-ribose + adenine. Its pathway is amino-acid biosynthesis; L-methionine biosynthesis via salvage pathway; S-methyl-5-thio-alpha-D-ribose 1-phosphate from S-methyl-5'-thioadenosine (hydrolase route): step 1/2. In terms of biological role, catalyzes the irreversible cleavage of the glycosidic bond in both 5'-methylthioadenosine (MTA) and S-adenosylhomocysteine (SAH/AdoHcy) to adenine and the corresponding thioribose, 5'-methylthioribose and S-ribosylhomocysteine, respectively. Also cleaves 5'-deoxyadenosine, a toxic by-product of radical S-adenosylmethionine (SAM) enzymes, into 5-deoxyribose and adenine. Thus, is required for in vivo function of the radical SAM enzymes biotin synthase and lipoic acid synthase, that are inhibited by 5'-deoxyadenosine accumulation. In Salmonella arizonae (strain ATCC BAA-731 / CDC346-86 / RSK2980), this protein is 5'-methylthioadenosine/S-adenosylhomocysteine nucleosidase.